The sequence spans 329 residues: GTP 3',8-cyclase (329 aa).

In terms of domain architecture, Radical SAM core spans 8-234 (AFARKYYYLR…QLRQRSDGPA (227 aa)). Arginine 17 is a GTP binding site. Cysteine 24 and cysteine 28 together coordinate [4Fe-4S] cluster. S-adenosyl-L-methionine is bound at residue tyrosine 30. Residue cysteine 31 coordinates [4Fe-4S] cluster. Residue arginine 68 participates in GTP binding. Glycine 72 lines the S-adenosyl-L-methionine pocket. Residue threonine 99 participates in GTP binding. Serine 123 is a binding site for S-adenosyl-L-methionine. GTP is bound at residue lysine 160. Methionine 194 is an S-adenosyl-L-methionine binding site. The [4Fe-4S] cluster site is built by cysteine 257 and cysteine 260. Residue 262-264 (RLR) participates in GTP binding. Cysteine 274 is a binding site for [4Fe-4S] cluster.

The protein belongs to the radical SAM superfamily. MoaA family. In terms of assembly, monomer and homodimer. Requires [4Fe-4S] cluster as cofactor.

It catalyses the reaction GTP + AH2 + S-adenosyl-L-methionine = (8S)-3',8-cyclo-7,8-dihydroguanosine 5'-triphosphate + 5'-deoxyadenosine + L-methionine + A + H(+). The protein operates within cofactor biosynthesis; molybdopterin biosynthesis. Functionally, catalyzes the cyclization of GTP to (8S)-3',8-cyclo-7,8-dihydroguanosine 5'-triphosphate. The protein is GTP 3',8-cyclase of Escherichia coli O17:K52:H18 (strain UMN026 / ExPEC).